The following is a 301-amino-acid chain: Type II restriction enzyme BslI subunit beta (301 aa).

A CHC2-type zinc finger spans residues 62-82 (CPDGHTKWNQNLTKEMTCSEC).

In terms of assembly, heterotetramer of two alpha and two beta subunits. The alpha subunit is believed to be responsible for DNA recognition, while the beta subunit is thought to mediate cleavage. Zn(2+) serves as cofactor.

It catalyses the reaction Endonucleolytic cleavage of DNA to give specific double-stranded fragments with terminal 5'-phosphates.. A P subtype restriction enzyme that recognizes the double-stranded sequence 5'-CCN(7)GG-3' and cleaves after N-7. This chain is Type II restriction enzyme BslI subunit beta, found in Bacillus sp. (strain NEB-606).